The following is a 257-amino-acid chain: Probable amino-acid ABC transporter ATP-binding protein HI_1078 (257 aa).

The 241-residue stretch at 4-244 folds into the ABC transporter domain; sequence LKVSNIQKNF…PQHERTKQFL (241 aa). Residue 36–43 coordinates ATP; sequence GPSGSGKT.

It belongs to the ABC transporter superfamily.

It is found in the cell inner membrane. Probably part of a binding-protein-dependent transport system for an amino acid. Probably responsible for energy coupling to the transport system. In Haemophilus influenzae (strain ATCC 51907 / DSM 11121 / KW20 / Rd), this protein is Probable amino-acid ABC transporter ATP-binding protein HI_1078.